Here is a 408-residue protein sequence, read N- to C-terminus: tRNA pseudouridine synthase D (408 aa).

The active-site Nucleophile is D82. The TRUD domain maps to 157–367 (GVPNRFGEQR…MEGERRPLRV (211 aa)).

It belongs to the pseudouridine synthase TruD family.

The catalysed reaction is uridine(13) in tRNA = pseudouridine(13) in tRNA. Its function is as follows. Responsible for synthesis of pseudouridine from uracil-13 in transfer RNAs. The polypeptide is tRNA pseudouridine synthase D (Geobacter sulfurreducens (strain ATCC 51573 / DSM 12127 / PCA)).